The primary structure comprises 150 residues: Classical arabinogalactan protein 6 (150 aa).

A signal peptide spans 1-20; it reads MARQFVVLVLLTLTIATAFA. Composition is skewed to low complexity over residues 19 to 75 and 85 to 98; these read FAAD…SPAA and SASS…APTV. The disordered stretch occupies residues 19–131; the sequence is FAADAPSASP…ESPKSGAVTT (113 aa). A lipid anchor (GPI-anchor amidated serine) is attached at S126. Positions 127–150 are cleaved as a propeptide — removed in mature form; that stretch reads GAVTTAKFSVVGTVATVGFFFFSF.

Belongs to the classical AGP family. O-glycosylated on the hydroxyproline residues. As to expression, expressed in the anthers.

It localises to the cell membrane. Functionally, proteoglycan that seems to be implicated in diverse developmental roles such as differentiation, cell-cell recognition, embryogenesis and programmed cell death. Plays an important role during the formation of the nexine layer of the pollen wall. This is Classical arabinogalactan protein 6 (AGP6) from Arabidopsis thaliana (Mouse-ear cress).